We begin with the raw amino-acid sequence, 400 residues long: Glutamyl-tRNA reductase (400 aa).

Residues 45–48 (TCNR), Ser103, 108–110 (EDQ), and Gln114 each bind substrate. Cys46 acts as the Nucleophile in catalysis. 179 to 184 (GYGEIG) provides a ligand contact to NADP(+).

It belongs to the glutamyl-tRNA reductase family. As to quaternary structure, homodimer.

It catalyses the reaction (S)-4-amino-5-oxopentanoate + tRNA(Glu) + NADP(+) = L-glutamyl-tRNA(Glu) + NADPH + H(+). It participates in porphyrin-containing compound metabolism; protoporphyrin-IX biosynthesis; 5-aminolevulinate from L-glutamyl-tRNA(Glu): step 1/2. In terms of biological role, catalyzes the NADPH-dependent reduction of glutamyl-tRNA(Glu) to glutamate 1-semialdehyde (GSA). The chain is Glutamyl-tRNA reductase from Clostridium perfringens (strain 13 / Type A).